A 367-amino-acid chain; its full sequence is DNA replication and repair protein RecF (367 aa).

30–37 (GANGSGKT) contributes to the ATP binding site.

It belongs to the RecF family.

Its subcellular location is the cytoplasm. The RecF protein is involved in DNA metabolism; it is required for DNA replication and normal SOS inducibility. RecF binds preferentially to single-stranded, linear DNA. It also seems to bind ATP. In Pseudomonas entomophila (strain L48), this protein is DNA replication and repair protein RecF.